A 1449-amino-acid polypeptide reads, in one-letter code: MGARNSVLSGKKADELEKIRLRPGGKKRYQLKHIVWAANELDRFGLAESLLENKEGCQKILSVLAPLVPTGSENLKSLYNTVCVLWCIHAEEKVKHTEEAKQIVQRHLVVETGTADKMPATSRPTAPPSGKGGNYPVQQIGGNYTHLPLSPRTLNAWVKLIEEKKFGAEVVPGFQALSEGCTPYDINQMLNCVGEHQAAMQIIREIINEEAADWDLQHPQPGPIPPGQLREPRGSDIAGTTSTVDEQIQWMYRQQNPIPVGNIYRRWIQLGLQKCVRMYNPTNILDVKQGPKEPFQSYVDRFYKSLRAEQTDPAVKNWMTQTLLIQNANPDCKLVLKGLGINPTLEEMLTACQGVGGPGQKARLMAEALKDALTQGPLPFAAVQQKGQRKIIKCWNCGKEGHSARQCRAPRRQGCWKCGKAGHVMAKCPERQAGFFRAWPMGKEAPQFPHGPDASGADTNCSPRGSSCGSTEELHEDGQKAEGEQRETLQGGNGGFAAPQFSLWRRPIVTAYIEEQPVEVLLDTGADDSIVAGIELGPNYTPKIVGGIGGFINTKEYKDVKIKVLGKVIKGTIMTGDTPINIFGRNLLTAMGMSLNLPIAKVEPIKVTLKPGKDGPKLRQWPLSKEKIIALREICEKMEKDGQLEEAPPTNPYNTPTFAIKKKDKNKWRMLIDFRELNKVTQDFTEVQLGIPHPAGLAKRRRITVLDVGDAYFSIPLDEEFRQYTAFTLPSVNNAEPGKRYIYKVLPQGWKGSPAIFQHTMRNVLEPFRKANPDVTLIQYMDDILIASDRTDLEHDRVVLQLKELLNSIGFSTPEEKFQKDPPFQWMGYELWPTKWKLQKIELPQRETWTVNDIQKLVGVLNWAAQIYPGIKTKHLCRLIRGKMTLTEEVQWTEMAEAEYEENKIILSQEQEGCYYQEGKPLEATVIKSQDNQWSYKIHQEDKILKVGKFAKIKNTHTNGVRLLAHVVQKIGKEAIVIWGQVPRFHLPVEREIWEQWWTDYWQVTWIPEWDFVSTPPLVRLVFNLVKEPIQGAETFYVDGSCNRQSREGKAGYVTDRGRDKAKLLEQTTNQQAELEAFYLALADSGPKANIIVDSQYVMGIVAGQPTESESRLVNQIIEEMIKKEAIYVAWVPAHKGIGGNQEVDHLVSQGIRQVLFLEKIEPAQEEHEKYHSNVKELVFKFGLPRLVAKQIVDTCDKCHQKGEAIHGQVNAELGTWQMDCTHLEGKIIIVAVHVASGFIEAEVIPQETGRQTALFLLKLASRWPITHLHTDNGANFTSQEVKMVAWWAGIEQTFGVPYNPQSQGVVEAMNHHLKTQIDRIREQANSIETIVLMAVHCMNFKRRGGIGDMTPAERLVNMITTEQEIQFQQSKNSKFKNFRVYYREGRDQLWKGPGELLWKGEGAVILKVGTEIKVVPRRKAKIIKDYGGGKELDSGSHLEDTGEAREVA.

Glycine 2 carries the N-myristoyl glycine; by host lipid modification. The Nuclear export signal signature appears at 16 to 22 (LEKIRLR). A Nuclear localization signal motif is present at residues 26–32 (KKRYQLK). 2 consecutive CCHC-type zinc fingers follow at residues 392 to 409 (IKCWNCGKEGHSARQCRA) and 413 to 430 (QGCWKCGKAGHVMAKCPE). The segment at 442–494 (GKEAPQFPHGPDASGADTNCSPRGSSCGSTEELHEDGQKAEGEQRETLQGGNG) is disordered. Residues 457–470 (ADTNCSPRGSSCGS) show a composition bias toward polar residues. Residues 472–487 (EELHEDGQKAEGEQRE) are compositionally biased toward basic and acidic residues. A Peptidase A2 domain is found at 518-587 (VEVLLDTGAD…TPINIFGRNL (70 aa)). Aspartate 523 functions as the For protease activity; shared with dimeric partner in the catalytic mechanism. The Reverse transcriptase domain maps to 641–831 (DGQLEEAPPT…PPFQWMGYEL (191 aa)). Mg(2+)-binding residues include aspartate 707, aspartate 782, and aspartate 783. The interval 824–832 (FQWMGYELW) is RT 'primer grip'. The Tryptophan repeat motif motif lies at 994-1010 (WEQWWTDYWQVTWIPEW). The RNase H type-1 domain occupies 1030–1153 (IQGAETFYVD…VDHLVSQGIR (124 aa)). 4 residues coordinate Mg(2+): aspartate 1039, glutamate 1074, aspartate 1094, and aspartate 1145. The Integrase-type zinc finger occupies 1159–1200 (EKIEPAQEEHEKYHSNVKELVFKFGLPRLVAKQIVDTCDKCH). 4 residues coordinate Zn(2+): histidine 1168, histidine 1172, cysteine 1196, and cysteine 1199. The Integrase catalytic domain occupies 1210–1360 (VNAELGTWQM…TPAERLVNMI (151 aa)). Positions 1220 and 1272 each coordinate Mg(2+). The integrase-type DNA-binding region spans 1379–1426 (FRVYYREGRDQLWKGPGELLWKGEGAVILKVGTEIKVVPRRKAKIIKD).

Homotrimer. Interacts with gp41 (via C-terminus). In terms of assembly, homodimer. The active site consists of two apposed aspartic acid residues. As to quaternary structure, heterodimer of p66 RT and p51 RT (RT p66/p51). Heterodimerization of RT is essential for DNA polymerase activity. Despite the sequence identities, p66 RT and p51 RT have distinct folding. Homotetramer; may further associate as a homohexadecamer. It depends on Mg(2+) as a cofactor. Specific enzymatic cleavages by the viral protease yield mature proteins. The protease is released by autocatalytic cleavage. The polyprotein is cleaved during and after budding, this process is termed maturation. Proteolytic cleavage of p66 RT removes the RNase H domain to yield the p51 RT subunit. Post-translationally, capsid protein p24 is phosphorylated.

It localises to the virion. It is found in the host nucleus. The protein localises to the host cytoplasm. Its subcellular location is the host cell membrane. It carries out the reaction Specific for a P1 residue that is hydrophobic, and P1' variable, but often Pro.. The catalysed reaction is Endohydrolysis of RNA in RNA/DNA hybrids. Three different cleavage modes: 1. sequence-specific internal cleavage of RNA. Human immunodeficiency virus type 1 and Moloney murine leukemia virus enzymes prefer to cleave the RNA strand one nucleotide away from the RNA-DNA junction. 2. RNA 5'-end directed cleavage 13-19 nucleotides from the RNA end. 3. DNA 3'-end directed cleavage 15-20 nucleotides away from the primer terminus.. The enzyme catalyses 3'-end directed exonucleolytic cleavage of viral RNA-DNA hybrid.. It catalyses the reaction DNA(n) + a 2'-deoxyribonucleoside 5'-triphosphate = DNA(n+1) + diphosphate. The viral protease is inhibited by many synthetic protease inhibitors (PIs), such as amprenavir, atazanavir, indinavir, loprinavir, nelfinavir, ritonavir and saquinavir. RT can be inhibited either by nucleoside RT inhibitors (NRTIs) or by non nucleoside RT inhibitors (NNRTIs). NRTIs act as chain terminators, whereas NNRTIs inhibit DNA polymerization by binding a small hydrophobic pocket near the RT active site and inducing an allosteric change in this region. Classical NRTIs are abacavir, adefovir (PMEA), didanosine (ddI), lamivudine (3TC), stavudine (d4T), tenofovir (PMPA), zalcitabine (ddC), and zidovudine (AZT). Classical NNRTIs are atevirdine (BHAP U-87201E), delavirdine, efavirenz (DMP-266), emivirine (I-EBU), and nevirapine (BI-RG-587). The tritherapies used as a basic effective treatment of AIDS associate two NRTIs and one NNRTI. Use of protease inhibitors in tritherapy regimens permit more ambitious therapeutic strategies. In terms of biological role, gag-Pol polyprotein and Gag polyprotein may regulate their own translation, by the binding genomic RNA in the 5'-UTR. At low concentration, Gag-Pol and Gag would promote translation, whereas at high concentration, the polyproteins encapsidate genomic RNA and then shut off translation. Functionally, matrix protein p17 has two main functions: in infected cell, it targets Gag and Gag-pol polyproteins to the plasma membrane via a multipartite membrane-binding signal, that includes its myristointegration complex. The myristoylation signal and the NLS exert conflicting influences its subcellular localization. The key regulation of these motifs might be phosphorylation of a portion of MA molecules on the C-terminal tyrosine at the time of virus maturation, by virion-associated cellular tyrosine kinase. Implicated in the release from host cell mediated by Vpu. Its function is as follows. Capsid protein p24 forms the conical core that encapsulates the genomic RNA-nucleocapsid complex in the virion. The core is constituted by capsid protein hexamer subunits. The core is disassembled soon after virion entry. Interaction with host PPIA/CYPA protects the virus from restriction by host TRIM5-alpha and from an unknown antiviral activity in host cells. This capsid restriction by TRIM5 is one of the factors which restricts SIV to the simian species. Nucleocapsid protein p7 encapsulates and protects viral dimeric unspliced (genomic) RNA. Binds these RNAs through its zinc fingers. Facilitates rearangement of nucleic acid secondary structure during retrotranscription of genomic RNA. This capability is referred to as nucleic acid chaperone activity. In terms of biological role, the aspartyl protease mediates proteolytic cleavages of Gag and Gag-Pol polyproteins during or shortly after the release of the virion from the plasma membrane. Cleavages take place as an ordered, step-wise cascade to yield mature proteins. This process is called maturation. Displays maximal activity during the budding process just prior to particle release from the cell. Also cleaves Nef and Vif, probably concomitantly with viral structural proteins on maturation of virus particles. Hydrolyzes host EIF4GI and PABP1 in order to shut off the capped cellular mRNA translation. The resulting inhibition of cellular protein synthesis serves to ensure maximal viral gene expression and to evade host immune response. Functionally, reverse transcriptase/ribonuclease H (RT) is a multifunctional enzyme that converts the viral dimeric RNA genome into dsDNA in the cytoplasm, shortly after virus entry into the cell. This enzyme displays a DNA polymerase activity that can copy either DNA or RNA templates, and a ribonuclease H (RNase H) activity that cleaves the RNA strand of RNA-DNA heteroduplexes in a partially processive 3' to 5' endonucleasic mode. Conversion of viral genomic RNA into dsDNA requires many steps. A tRNA binds to the primer-binding site (PBS) situated at the 5'-end of the viral RNA. RT uses the 3' end of the tRNA primer to perform a short round of RNA-dependent minus-strand DNA synthesis. The reading proceeds through the U5 region and ends after the repeated (R) region which is present at both ends of viral RNA. The portion of the RNA-DNA heteroduplex is digested by the RNase H, resulting in a ssDNA product attached to the tRNA primer. This ssDNA/tRNA hybridizes with the identical R region situated at the 3' end of viral RNA. This template exchange, known as minus-strand DNA strong stop transfer, can be either intra- or intermolecular. RT uses the 3' end of this newly synthesized short ssDNA to perform the RNA-dependent minus-strand DNA synthesis of the whole template. RNase H digests the RNA template except for two polypurine tracts (PPTs) situated at the 5'-end and near the center of the genome. It is not clear if both polymerase and RNase H activities are simultaneous. RNase H can probably proceed both in a polymerase-dependent (RNA cut into small fragments by the same RT performing DNA synthesis) and a polymerase-independent mode (cleavage of remaining RNA fragments by free RTs). Secondly, RT performs DNA-directed plus-strand DNA synthesis using the PPTs that have not been removed by RNase H as primers. PPTs and tRNA primers are then removed by RNase H. The 3' and 5' ssDNA PBS regions hybridize to form a circular dsDNA intermediate. Strand displacement synthesis by RT to the PBS and PPT ends produces a blunt ended, linear dsDNA copy of the viral genome that includes long terminal repeats (LTRs) at both ends. Its function is as follows. Integrase catalyzes viral DNA integration into the host chromosome, by performing a series of DNA cutting and joining reactions. This enzyme activity takes place after virion entry into a cell and reverse transcription of the RNA genome in dsDNA. The first step in the integration process is 3' processing. This step requires a complex comprising the viral genome, matrix protein, Vpr and integrase. This complex is called the pre-integration complex (PIC). The integrase protein removes 2 nucleotides from each 3' end of the viral DNA, leaving recessed CA OH's at the 3' ends. In the second step, the PIC enters cell nucleus. This process is mediated through integrase and Vpr proteins, and allows the virus to infect a non dividing cell. This ability to enter the nucleus is specific of lentiviruses, other retroviruses cannot and rely on cell division to access cell chromosomes. In the third step, termed strand transfer, the integrase protein joins the previously processed 3' ends to the 5' ends of strands of target cellular DNA at the site of integration. The 5'-ends are produced by integrase-catalyzed staggered cuts, 5 bp apart. A Y-shaped, gapped, recombination intermediate results, with the 5'-ends of the viral DNA strands and the 3' ends of target DNA strands remaining unjoined, flanking a gap of 5 bp. The last step is viral DNA integration into host chromosome. This involves host DNA repair synthesis in which the 5 bp gaps between the unjoined strands are filled in and then ligated. Since this process occurs at both cuts flanking the SIV genome, a 5 bp duplication of host DNA is produced at the ends of SIV integration. Alternatively, Integrase may catalyze the excision of viral DNA just after strand transfer, this is termed disintegration. The chain is Gag-Pol polyprotein (gag-pol) from Cercopithecidae (Old World monkeys).